We begin with the raw amino-acid sequence, 121 residues long: Large ribosomal subunit protein bL19 (121 aa).

The protein belongs to the bacterial ribosomal protein bL19 family.

Its function is as follows. This protein is located at the 30S-50S ribosomal subunit interface and may play a role in the structure and function of the aminoacyl-tRNA binding site. The sequence is that of Large ribosomal subunit protein bL19 from Mesomycoplasma hyopneumoniae (strain 7448) (Mycoplasma hyopneumoniae).